Here is a 332-residue protein sequence, read N- to C-terminus: Methionyl-tRNA formyltransferase (332 aa).

Residue 124-127 (SLLP) participates in (6S)-5,6,7,8-tetrahydrofolate binding.

Belongs to the Fmt family.

The catalysed reaction is L-methionyl-tRNA(fMet) + (6R)-10-formyltetrahydrofolate = N-formyl-L-methionyl-tRNA(fMet) + (6S)-5,6,7,8-tetrahydrofolate + H(+). Its function is as follows. Attaches a formyl group to the free amino group of methionyl-tRNA(fMet). The formyl group appears to play a dual role in the initiator identity of N-formylmethionyl-tRNA by promoting its recognition by IF2 and preventing the misappropriation of this tRNA by the elongation apparatus. In Polynucleobacter necessarius subsp. necessarius (strain STIR1), this protein is Methionyl-tRNA formyltransferase.